The following is a 357-amino-acid chain: MPYIGSLKVNQFRNLADVDITPHSQFNFFFGQNGAGKTSILESIYYLSVGRSFRTHLPQRLIQDNTDRFLIFITLYNGTQFIPLGVERDCHGDRCLRINGETASSWSLAAKRLPLCSLSAMSHRFLLDGPRVRRQFLDWLMFHVEPSFFSIWQRLQRSLKQRNAALKAKLPLGEITHWDKMLVEDGERLHQLRQNVVTEFRPLFTQMLQQFLPAYPLIGHYFRGWSEKYSLMEQLQINLKQDLQRGYTQAGPQRADFRLTLRDLPAQDILSQGQQKLVTYALHFAQGLLLKEKTGISPIYLIDDLPAELDANKRDCVIDLVNYLESQVFISGIDPNEIRLPPHSTLFHVKHGKVAAL.

31–38 contributes to the ATP binding site; that stretch reads GQNGAGKT.

This sequence belongs to the RecF family.

It localises to the cytoplasm. Functionally, the RecF protein is involved in DNA metabolism; it is required for DNA replication and normal SOS inducibility. RecF binds preferentially to single-stranded, linear DNA. It also seems to bind ATP. The sequence is that of DNA replication and repair protein RecF from Coxiella burnetii (strain Dugway 5J108-111).